The sequence spans 240 residues: Adapter protein MecA (240 aa).

Belongs to the MecA family. Homodimer.

Enables the recognition and targeting of unfolded and aggregated proteins to the ClpC protease or to other proteins involved in proteolysis. The polypeptide is Adapter protein MecA (Streptococcus mutans serotype c (strain ATCC 700610 / UA159)).